Consider the following 86-residue polypeptide: Small ribosomal subunit protein bS20 (86 aa).

The segment covering 1 to 11 (MANHKSALKRA) has biased composition (basic residues). The tract at residues 1–27 (MANHKSALKRARQNEERRIRNRARKTR) is disordered.

Belongs to the bacterial ribosomal protein bS20 family.

Binds directly to 16S ribosomal RNA. The polypeptide is Small ribosomal subunit protein bS20 (Syntrophobacter fumaroxidans (strain DSM 10017 / MPOB)).